We begin with the raw amino-acid sequence, 556 residues long: Small ribosomal subunit protein uS3m (556 aa).

This sequence belongs to the universal ribosomal protein uS3 family. In terms of assembly, component of the mitochondrial ribosome small subunit.

The protein localises to the mitochondrion. The sequence is that of Small ribosomal subunit protein uS3m (RPS3) from Arabidopsis thaliana (Mouse-ear cress).